Reading from the N-terminus, the 406-residue chain is Acetate kinase (406 aa).

A Mg(2+)-binding site is contributed by asparagine 10. An ATP-binding site is contributed by lysine 17. Residue arginine 92 coordinates substrate. Aspartate 151 acts as the Proton donor/acceptor in catalysis. ATP is bound by residues 211–215, 286–288, and 335–339; these read HLGSG, DFR, and GIGEN. Glutamate 389 lines the Mg(2+) pocket.

The protein belongs to the acetokinase family. In terms of assembly, homodimer. Requires Mg(2+) as cofactor. The cofactor is Mn(2+).

The protein resides in the cytoplasm. The catalysed reaction is acetate + ATP = acetyl phosphate + ADP. It functions in the pathway metabolic intermediate biosynthesis; acetyl-CoA biosynthesis; acetyl-CoA from acetate: step 1/2. Its function is as follows. Catalyzes the formation of acetyl phosphate from acetate and ATP. Can also catalyze the reverse reaction. This Buchnera aphidicola subsp. Cinara cedri (strain Cc) protein is Acetate kinase.